The sequence spans 168 residues: 2-C-methyl-D-erythritol 2,4-cyclodiphosphate synthase (168 aa).

Positions 13 and 15 each coordinate a divalent metal cation. Residues 13–15 (DVH) and 39–40 (HS) contribute to the 4-CDP-2-C-methyl-D-erythritol 2-phosphate site. Histidine 47 contributes to the a divalent metal cation binding site. 4-CDP-2-C-methyl-D-erythritol 2-phosphate is bound by residues 61–63 (DIG), 66–70 (FPDTD), phenylalanine 144, and arginine 147.

It belongs to the IspF family. Homotrimer. Requires a divalent metal cation as cofactor.

The enzyme catalyses 4-CDP-2-C-methyl-D-erythritol 2-phosphate = 2-C-methyl-D-erythritol 2,4-cyclic diphosphate + CMP. It participates in isoprenoid biosynthesis; isopentenyl diphosphate biosynthesis via DXP pathway; isopentenyl diphosphate from 1-deoxy-D-xylulose 5-phosphate: step 4/6. Functionally, involved in the biosynthesis of isopentenyl diphosphate (IPP) and dimethylallyl diphosphate (DMAPP), two major building blocks of isoprenoid compounds. Catalyzes the conversion of 4-diphosphocytidyl-2-C-methyl-D-erythritol 2-phosphate (CDP-ME2P) to 2-C-methyl-D-erythritol 2,4-cyclodiphosphate (ME-CPP) with a corresponding release of cytidine 5-monophosphate (CMP). The protein is 2-C-methyl-D-erythritol 2,4-cyclodiphosphate synthase of Ralstonia nicotianae (strain ATCC BAA-1114 / GMI1000) (Ralstonia solanacearum).